Reading from the N-terminus, the 165-residue chain is Cysteine-rich hydrophobic domain-containing protein 2 (165 aa).

Residues 1–26 are a coiled coil; sequence MADFDEIYEEEEDEERALEEQLLKYS. The CHIC motif (Cys-rich) motif lies at 88–106; that stretch reads CGCLCCCCTLGCSMWPVIC.

The protein belongs to the CHIC family. Palmitoylation in the CHIC motif is required for membrane association.

It localises to the cell membrane. Its subcellular location is the cytoplasmic vesicle. The polypeptide is Cysteine-rich hydrophobic domain-containing protein 2 (CHIC2) (Homo sapiens (Human)).